Here is a 688-residue protein sequence, read N- to C-terminus: ATP-dependent zinc metalloprotease FTSH 6, chloroplastic (688 aa).

A chloroplast-targeting transit peptide spans 1–75; it reads MKMASSSSAL…GFTSALGTVL (75 aa). Over residues 25-36 the composition is skewed to polar residues; it reads QQFQKPASLSKS. Positions 25-44 are disordered; it reads QQFQKPASLSKSSHTHKPSL. A thylakoid-targeting transit peptide spans 76 to 83; that stretch reads AHPAKAEP. Topologically, residues 84 to 168 are lumenal, thylakoid; it reads EAPIEATSNR…AHPMNVNWGA (85 aa). The chain crosses the membrane as a helical span at residues 169 to 189; that stretch reads FLLNFLGNLGFPLILLVSLLL. The Stromal portion of the chain corresponds to 190–688; that stretch reads TSSSRRNPAG…RIRINDLISV (499 aa). ATP is bound at residue 264-271; that stretch reads GPPGTGKT. Residue His-485 participates in Zn(2+) binding. The active site involves Glu-486. Positions 489 and 563 each coordinate Zn(2+).

The protein in the N-terminal section; belongs to the AAA ATPase family. In the C-terminal section; belongs to the peptidase M41 family. Zn(2+) is required as a cofactor.

It is found in the plastid. The protein resides in the chloroplast thylakoid membrane. Probable ATP-dependent zinc metallopeptidase. Involved in the degradation of the light-harvesting complex of photosystem II (LHC II) during senescence or high light acclimation. The polypeptide is ATP-dependent zinc metalloprotease FTSH 6, chloroplastic (FTSH6) (Arabidopsis thaliana (Mouse-ear cress)).